Reading from the N-terminus, the 328-residue chain is Phenylalanine--tRNA ligase alpha subunit (328 aa).

Mg(2+) is bound at residue Glu-253.

Belongs to the class-II aminoacyl-tRNA synthetase family. Phe-tRNA synthetase alpha subunit type 1 subfamily. As to quaternary structure, tetramer of two alpha and two beta subunits. Mg(2+) serves as cofactor.

The protein resides in the cytoplasm. The enzyme catalyses tRNA(Phe) + L-phenylalanine + ATP = L-phenylalanyl-tRNA(Phe) + AMP + diphosphate + H(+). The protein is Phenylalanine--tRNA ligase alpha subunit of Actinobacillus pleuropneumoniae serotype 7 (strain AP76).